Reading from the N-terminus, the 227-residue chain is PKHD-type hydroxylase BTH_II1201 (227 aa).

One can recognise a Fe2OG dioxygenase domain in the interval 78–178 (KVFPPLFNRY…RVASFFWIQS (101 aa)). 3 residues coordinate Fe cation: His96, Asp98, and His159. Arg169 serves as a coordination point for 2-oxoglutarate.

The cofactor is Fe(2+). L-ascorbate serves as cofactor.

This Burkholderia thailandensis (strain ATCC 700388 / DSM 13276 / CCUG 48851 / CIP 106301 / E264) protein is PKHD-type hydroxylase BTH_II1201.